A 345-amino-acid chain; its full sequence is Tetraacyldisaccharide 4'-kinase (345 aa).

51–58 (HVGGAGKT) is an ATP binding site.

Belongs to the LpxK family.

The enzyme catalyses a lipid A disaccharide + ATP = a lipid IVA + ADP + H(+). The protein operates within glycolipid biosynthesis; lipid IV(A) biosynthesis; lipid IV(A) from (3R)-3-hydroxytetradecanoyl-[acyl-carrier-protein] and UDP-N-acetyl-alpha-D-glucosamine: step 6/6. In terms of biological role, transfers the gamma-phosphate of ATP to the 4'-position of a tetraacyldisaccharide 1-phosphate intermediate (termed DS-1-P) to form tetraacyldisaccharide 1,4'-bis-phosphate (lipid IVA). This Bradyrhizobium sp. (strain BTAi1 / ATCC BAA-1182) protein is Tetraacyldisaccharide 4'-kinase.